The sequence spans 270 residues: Meiotic recombination 1 protein (270 aa).

The region spanning 191-225 (EIKLNKTQITFLIGAKGTRIESLREKSGASIKIIP) is the KH domain.

In terms of biological role, required for chromosome pairing and genetic recombination. MER1 may function to bring the axial elements of the synaptonemal complex corresponding to homologous chromosomes together by initiating recombination. MER1 might be responsible for regulating the MER2 gene and/or gene product. In Saccharomyces cerevisiae (strain ATCC 204508 / S288c) (Baker's yeast), this protein is Meiotic recombination 1 protein (MER1).